A 133-amino-acid chain; its full sequence is Small ribosomal subunit protein uS8 (133 aa).

The protein belongs to the universal ribosomal protein uS8 family. As to quaternary structure, part of the 30S ribosomal subunit. Contacts proteins S5 and S12.

Functionally, one of the primary rRNA binding proteins, it binds directly to 16S rRNA central domain where it helps coordinate assembly of the platform of the 30S subunit. The chain is Small ribosomal subunit protein uS8 from Gloeothece citriformis (strain PCC 7424) (Cyanothece sp. (strain PCC 7424)).